The sequence spans 156 residues: ATP synthase subunit b (156 aa).

The chain crosses the membrane as a helical span at residues alanine 11–alanine 31.

This sequence belongs to the ATPase B chain family. In terms of assembly, F-type ATPases have 2 components, F(1) - the catalytic core - and F(0) - the membrane proton channel. F(1) has five subunits: alpha(3), beta(3), gamma(1), delta(1), epsilon(1). F(0) has three main subunits: a(1), b(2) and c(10-14). The alpha and beta chains form an alternating ring which encloses part of the gamma chain. F(1) is attached to F(0) by a central stalk formed by the gamma and epsilon chains, while a peripheral stalk is formed by the delta and b chains.

It is found in the cell inner membrane. In terms of biological role, f(1)F(0) ATP synthase produces ATP from ADP in the presence of a proton or sodium gradient. F-type ATPases consist of two structural domains, F(1) containing the extramembraneous catalytic core and F(0) containing the membrane proton channel, linked together by a central stalk and a peripheral stalk. During catalysis, ATP synthesis in the catalytic domain of F(1) is coupled via a rotary mechanism of the central stalk subunits to proton translocation. Its function is as follows. Component of the F(0) channel, it forms part of the peripheral stalk, linking F(1) to F(0). The chain is ATP synthase subunit b from Psychromonas ingrahamii (strain DSM 17664 / CCUG 51855 / 37).